The primary structure comprises 691 residues: DNA ligase (691 aa).

NAD(+)-binding positions include 41-45 (DAEYD), 90-91 (SL), and E130. Residue K132 is the N6-AMP-lysine intermediate of the active site. The NAD(+) site is built by R153, E190, K307, and K331. C425, C428, C443, and C449 together coordinate Zn(2+). The BRCT domain occupies 610–691 (APQGVLAGKT…LHQLLEGNTP (82 aa)).

Belongs to the NAD-dependent DNA ligase family. LigA subfamily. Requires Mg(2+) as cofactor. The cofactor is Mn(2+).

The catalysed reaction is NAD(+) + (deoxyribonucleotide)n-3'-hydroxyl + 5'-phospho-(deoxyribonucleotide)m = (deoxyribonucleotide)n+m + AMP + beta-nicotinamide D-nucleotide.. Its function is as follows. DNA ligase that catalyzes the formation of phosphodiester linkages between 5'-phosphoryl and 3'-hydroxyl groups in double-stranded DNA using NAD as a coenzyme and as the energy source for the reaction. It is essential for DNA replication and repair of damaged DNA. The polypeptide is DNA ligase (Burkholderia cenocepacia (strain HI2424)).